Here is a 172-residue protein sequence, read N- to C-terminus: Ribosome maturation factor RimM (172 aa).

In terms of domain architecture, PRC barrel spans glutamate 96–leucine 170.

This sequence belongs to the RimM family. As to quaternary structure, binds ribosomal protein uS19.

The protein localises to the cytoplasm. An accessory protein needed during the final step in the assembly of 30S ribosomal subunit, possibly for assembly of the head region. Essential for efficient processing of 16S rRNA. May be needed both before and after RbfA during the maturation of 16S rRNA. It has affinity for free ribosomal 30S subunits but not for 70S ribosomes. This is Ribosome maturation factor RimM from Listeria monocytogenes serotype 4b (strain CLIP80459).